The chain runs to 183 residues: Dual-action ribosomal maturation protein DarP (183 aa).

Belongs to the DarP family.

It localises to the cytoplasm. Member of a network of 50S ribosomal subunit biogenesis factors which assembles along the 30S-50S interface, preventing incorrect 23S rRNA structures from forming. Promotes peptidyl transferase center (PTC) maturation. In Escherichia coli O81 (strain ED1a), this protein is Dual-action ribosomal maturation protein DarP.